The primary structure comprises 184 residues: Adenine phosphoribosyltransferase (184 aa).

This sequence belongs to the purine/pyrimidine phosphoribosyltransferase family. Homodimer.

The protein resides in the cytoplasm. The enzyme catalyses AMP + diphosphate = 5-phospho-alpha-D-ribose 1-diphosphate + adenine. Its pathway is purine metabolism; AMP biosynthesis via salvage pathway; AMP from adenine: step 1/1. Functionally, catalyzes a salvage reaction resulting in the formation of AMP, that is energically less costly than de novo synthesis. This chain is Adenine phosphoribosyltransferase, found in Paracidovorax citrulli (strain AAC00-1) (Acidovorax citrulli).